The primary structure comprises 181 residues: Endoglucanase (181 aa).

Cysteine 4 and cysteine 16 are oxidised to a cystine. Aspartate 24 serves as the catalytic Nucleophile. Disulfide bonds link cysteine 30–cysteine 69, cysteine 32–cysteine 176, cysteine 65–cysteine 178, cysteine 72–cysteine 157, and cysteine 103–cysteine 113. Aspartate 132 serves as the catalytic Proton donor.

In terms of tissue distribution, digestive gland.

The catalysed reaction is Endohydrolysis of (1-&gt;4)-beta-D-glucosidic linkages in cellulose, lichenin and cereal beta-D-glucans.. In terms of biological role, active towards the soluble carboxymethylcellulose (CMC). Possesses expansin activity too. The protein is Endoglucanase of Mytilus edulis (Blue mussel).